A 105-amino-acid polypeptide reads, in one-letter code: Large ribosomal subunit protein uL24 (105 aa).

The protein belongs to the universal ribosomal protein uL24 family. Part of the 50S ribosomal subunit.

In terms of biological role, one of two assembly initiator proteins, it binds directly to the 5'-end of the 23S rRNA, where it nucleates assembly of the 50S subunit. Its function is as follows. One of the proteins that surrounds the polypeptide exit tunnel on the outside of the subunit. The sequence is that of Large ribosomal subunit protein uL24 from Thermotoga maritima (strain ATCC 43589 / DSM 3109 / JCM 10099 / NBRC 100826 / MSB8).